We begin with the raw amino-acid sequence, 438 residues long: Methylenetetrahydrofolate--tRNA-(uracil-5-)-methyltransferase TrmFO (438 aa).

Residue 10–15 participates in FAD binding; it reads GGGLAG.

This sequence belongs to the MnmG family. TrmFO subfamily. It depends on FAD as a cofactor.

The protein resides in the cytoplasm. The catalysed reaction is uridine(54) in tRNA + (6R)-5,10-methylene-5,6,7,8-tetrahydrofolate + NADH + H(+) = 5-methyluridine(54) in tRNA + (6S)-5,6,7,8-tetrahydrofolate + NAD(+). It carries out the reaction uridine(54) in tRNA + (6R)-5,10-methylene-5,6,7,8-tetrahydrofolate + NADPH + H(+) = 5-methyluridine(54) in tRNA + (6S)-5,6,7,8-tetrahydrofolate + NADP(+). Its function is as follows. Catalyzes the folate-dependent formation of 5-methyl-uridine at position 54 (M-5-U54) in all tRNAs. The protein is Methylenetetrahydrofolate--tRNA-(uracil-5-)-methyltransferase TrmFO of Trichormus variabilis (strain ATCC 29413 / PCC 7937) (Anabaena variabilis).